A 363-amino-acid polypeptide reads, in one-letter code: 3-isopropylmalate dehydrogenase (363 aa).

Gly-79–Glu-92 contributes to the NAD(+) binding site. Residues Arg-100, Arg-110, Arg-139, and Asp-228 each contribute to the substrate site. The Mg(2+) site is built by Asp-228, Asp-252, and Asp-256. Residue Gly-286–Asn-298 coordinates NAD(+).

This sequence belongs to the isocitrate and isopropylmalate dehydrogenases family. LeuB type 1 subfamily. Homodimer. The cofactor is Mg(2+). Mn(2+) is required as a cofactor.

The protein localises to the cytoplasm. It carries out the reaction (2R,3S)-3-isopropylmalate + NAD(+) = 4-methyl-2-oxopentanoate + CO2 + NADH. It participates in amino-acid biosynthesis; L-leucine biosynthesis; L-leucine from 3-methyl-2-oxobutanoate: step 3/4. Functionally, catalyzes the oxidation of 3-carboxy-2-hydroxy-4-methylpentanoate (3-isopropylmalate) to 3-carboxy-4-methyl-2-oxopentanoate. The product decarboxylates to 4-methyl-2 oxopentanoate. The polypeptide is 3-isopropylmalate dehydrogenase (Vibrio cholerae serotype O1 (strain ATCC 39315 / El Tor Inaba N16961)).